A 281-amino-acid polypeptide reads, in one-letter code: MAMMEVQGGPSLGQTCVLIVIFTVLLQSLCVAVTYVYFTNELKQMQDKYSKSGIACFLKEDDSYWDPNDEESMNSPCWQVKWQLRQLVRKMILRTSEETISTVQEKQQNISPLVRERGPQRVAAHITGTRGRSNTLSSPNSKNEKALGRKINSWESSRSGHSFLSNLHLRNGELVIHEKGFYYIYSQTYFRFQEEIKENTKNDKQMVQYIYKYTSYPDPILLMKSARNSCWSKDAEYGLYSIYQGGIFELKENDRIFVSVTNEHLIDMDHEASFFGAFLVG.

Topologically, residues 1–17 are cytoplasmic; sequence MAMMEVQGGPSLGQTCV. Residues 18–38 traverse the membrane as a helical; Signal-anchor for type II membrane protein segment; that stretch reads LIVIFTVLLQSLCVAVTYVYF. The Extracellular segment spans residues 39–281; that stretch reads TNELKQMQDK…ASFFGAFLVG (243 aa). The THD domain maps to 122–280; it reads VAAHITGTRG…EASFFGAFLV (159 aa). The interval 124–144 is disordered; that stretch reads AHITGTRGRSNTLSSPNSKNE. The segment covering 130–141 has biased composition (polar residues); it reads RGRSNTLSSPNS. Cysteine 230 serves as a coordination point for Zn(2+).

It belongs to the tumor necrosis factor family. Homotrimer. One TNFSF10 homotrimer interacts with three TNFSF10A mononers. One TNFSF10 homotrimer interacts with three TNFSF10B mononers. Post-translationally, tyrosine phosphorylated by PKDCC/VLK. Widespread; most predominant in spleen, lung and prostate.

The protein resides in the cell membrane. It is found in the secreted. Functionally, cytokine that binds to TNFRSF10A/TRAILR1, TNFRSF10B/TRAILR2, TNFRSF10C/TRAILR3, TNFRSF10D/TRAILR4 and possibly also to TNFRSF11B/OPG. Induces apoptosis. Its activity may be modulated by binding to the decoy receptors TNFRSF10C/TRAILR3, TNFRSF10D/TRAILR4 and TNFRSF11B/OPG that cannot induce apoptosis. The sequence is that of Tumor necrosis factor ligand superfamily member 10 (TNFSF10) from Homo sapiens (Human).